The following is a 90-amino-acid chain: MSSGGLLLLLGLLTLWAELTPVSGQDHPKFCYLPADPGRCKAHIPRFYYDSASNKCNKFIYGGCPGNANNFKTWDECRQTCGASAMGRPT.

Residues 1–24 (MSSGGLLLLLGLLTLWAELTPVSG) form the signal peptide. Gln-25 carries the pyrrolidone carboxylic acid modification. In terms of domain architecture, BPTI/Kunitz inhibitor spans 31–81 (CYLPADPGRCKAHIPRFYYDSASNKCNKFIYGGCPGNANNFKTWDECRQTC). 3 disulfides stabilise this stretch: Cys-31-Cys-81, Cys-40-Cys-64, and Cys-56-Cys-77. The propeptide occupies 86 to 90 (MGRPT).

The protein belongs to the venom Kunitz-type family. In terms of tissue distribution, expressed by the venom gland.

Its subcellular location is the secreted. Functionally, serine protease inhibitor that principally inhibits trypsin (Ki=0.34 nM). Also inhibits alpha-chymotrypsin (Ki=270 nM), plasmin, plasma and pancreatic kallikrein. The chain is Kunitz-type serine protease inhibitor 1 from Vipera ammodytes ammodytes (Western sand viper).